Consider the following 267-residue polypeptide: Acyl-[acyl-carrier-protein]--UDP-N-acetylglucosamine O-acyltransferase (267 aa).

It belongs to the transferase hexapeptide repeat family. LpxA subfamily. In terms of assembly, homotrimer.

The protein localises to the cytoplasm. The catalysed reaction is a (3R)-hydroxyacyl-[ACP] + UDP-N-acetyl-alpha-D-glucosamine = a UDP-3-O-[(3R)-3-hydroxyacyl]-N-acetyl-alpha-D-glucosamine + holo-[ACP]. It participates in glycolipid biosynthesis; lipid IV(A) biosynthesis; lipid IV(A) from (3R)-3-hydroxytetradecanoyl-[acyl-carrier-protein] and UDP-N-acetyl-alpha-D-glucosamine: step 1/6. Involved in the biosynthesis of lipid A, a phosphorylated glycolipid that anchors the lipopolysaccharide to the outer membrane of the cell. The polypeptide is Acyl-[acyl-carrier-protein]--UDP-N-acetylglucosamine O-acyltransferase (Proteus mirabilis (strain HI4320)).